A 98-amino-acid chain; its full sequence is Large ribosomal subunit protein uL23 (98 aa).

The protein belongs to the universal ribosomal protein uL23 family. As to quaternary structure, part of the 50S ribosomal subunit. Contacts protein L29, and trigger factor when it is bound to the ribosome.

Functionally, one of the early assembly proteins it binds 23S rRNA. One of the proteins that surrounds the polypeptide exit tunnel on the outside of the ribosome. Forms the main docking site for trigger factor binding to the ribosome. In Hahella chejuensis (strain KCTC 2396), this protein is Large ribosomal subunit protein uL23.